Consider the following 475-residue polypeptide: Ribulose bisphosphate carboxylase large chain (475 aa).

A propeptide spanning residues 1–2 (MS) is cleaved from the precursor. Position 3 is an N-acetylproline (Pro3). Lys14 is subject to N6,N6,N6-trimethyllysine. Substrate is bound by residues Asn123 and Thr173. Lys175 serves as the catalytic Proton acceptor. Lys177 provides a ligand contact to substrate. Mg(2+)-binding residues include Lys201, Asp203, and Glu204. Lys201 carries the post-translational modification N6-carboxylysine. His294 acts as the Proton acceptor in catalysis. Substrate-binding residues include Arg295, His327, and Ser379.

The protein belongs to the RuBisCO large chain family. Type I subfamily. In terms of assembly, heterohexadecamer of 8 large chains and 8 small chains; disulfide-linked. The disulfide link is formed within the large subunit homodimers. The cofactor is Mg(2+). In terms of processing, the disulfide bond which can form in the large chain dimeric partners within the hexadecamer appears to be associated with oxidative stress and protein turnover.

Its subcellular location is the plastid. The protein resides in the chloroplast. It catalyses the reaction 2 (2R)-3-phosphoglycerate + 2 H(+) = D-ribulose 1,5-bisphosphate + CO2 + H2O. It carries out the reaction D-ribulose 1,5-bisphosphate + O2 = 2-phosphoglycolate + (2R)-3-phosphoglycerate + 2 H(+). Its function is as follows. RuBisCO catalyzes two reactions: the carboxylation of D-ribulose 1,5-bisphosphate, the primary event in carbon dioxide fixation, as well as the oxidative fragmentation of the pentose substrate in the photorespiration process. Both reactions occur simultaneously and in competition at the same active site. The chain is Ribulose bisphosphate carboxylase large chain from Pinus radiata (Monterey pine).